Here is a 286-residue protein sequence, read N- to C-terminus: Shikimate dehydrogenase (NADP(+)) (286 aa).

Shikimate is bound by residues S22 to S24 and T69. The active-site Proton acceptor is K73. NADP(+) is bound at residue E85. 2 residues coordinate shikimate: N94 and D109. Residues G133 to A137, N157 to K162, and L231 each bind NADP(+). Y233 is a binding site for shikimate. G254 is a binding site for NADP(+).

It belongs to the shikimate dehydrogenase family. As to quaternary structure, homodimer.

The enzyme catalyses shikimate + NADP(+) = 3-dehydroshikimate + NADPH + H(+). It functions in the pathway metabolic intermediate biosynthesis; chorismate biosynthesis; chorismate from D-erythrose 4-phosphate and phosphoenolpyruvate: step 4/7. Involved in the biosynthesis of the chorismate, which leads to the biosynthesis of aromatic amino acids. Catalyzes the reversible NADPH linked reduction of 3-dehydroshikimate (DHSA) to yield shikimate (SA). The polypeptide is Shikimate dehydrogenase (NADP(+)) (Alkaliphilus oremlandii (strain OhILAs) (Clostridium oremlandii (strain OhILAs))).